Here is a 252-residue protein sequence, read N- to C-terminus: Major prion protein (252 aa).

The signal sequence occupies residues 1-28 (MAHLGYWMLLLFVATWSDVGLCKKRPKP). An interaction with GRB2, ERI3 and SYN1 region spans residues 23 to 229 (KKRPKPGGGW…ESQAAYQRAA (207 aa)). The disordered stretch occupies residues 26–109 (PKPGGGWNTG…KPSKPKTSMK (84 aa)). 5 consecutive repeat copies span residues 51–59 (PPQGGGWGQ), 60–67 (PHGGGWGQ), 68–75 (PHGGGWGQ), 76–83 (PHGGGWGQ), and 84–92 (PHGGGWGQG). Residues 51-92 (PPQGGGWGQPHGGGWGQPHGGGWGQPHGGGWGQPHGGGWGQG) are 5 X 8 AA tandem repeats of P-H-G-G-G-W-G-Q. Residues 53-93 (QGGGWGQPHGGGWGQPHGGGWGQPHGGGWGQPHGGGWGQGG) show a composition bias toward gly residues. 12 residues coordinate Cu(2+): histidine 61, glycine 62, glycine 63, histidine 69, glycine 70, glycine 71, histidine 77, glycine 78, glycine 79, histidine 85, glycine 86, and glycine 87. Cysteines 178 and 213 form a disulfide. 2 N-linked (GlcNAc...) asparagine glycosylation sites follow: asparagine 180 and asparagine 196. A lipid anchor (GPI-anchor amidated alanine) is attached at alanine 229. A propeptide spans 230–252 (GVLLFSSPPVILLISFLIFLIVG) (removed in mature form).

This sequence belongs to the prion family. Monomer and homodimer. Has a tendency to aggregate into amyloid fibrils containing a cross-beta spine, formed by a steric zipper of superposed beta-strands. Soluble oligomers may represent an intermediate stage on the path to fibril formation. Copper binding may promote oligomerization. Interacts with GRB2, APP, ERI3/PRNPIP and SYN1. Mislocalized cytosolically exposed PrP interacts with MGRN1; this interaction alters MGRN1 subcellular location and causes lysosomal enlargement. Interacts with KIAA1191.

The protein resides in the cell membrane. It is found in the golgi apparatus. Functionally, its primary physiological function is unclear. Has cytoprotective activity against internal or environmental stresses. May play a role in neuronal development and synaptic plasticity. May be required for neuronal myelin sheath maintenance. May play a role in iron uptake and iron homeostasis. Soluble oligomers are toxic to cultured neuroblastoma cells and induce apoptosis (in vitro). Association with GPC1 (via its heparan sulfate chains) targets PRNP to lipid rafts. Also provides Cu(2+) or Zn(2+) for the ascorbate-mediated GPC1 deaminase degradation of its heparan sulfate side chains. This chain is Major prion protein (PRNP), found in Oryctolagus cuniculus (Rabbit).